The primary structure comprises 152 residues: D-aminoacyl-tRNA deacylase (152 aa).

Positions 137 to 138 (GP) match the Gly-cisPro motif, important for rejection of L-amino acids motif.

This sequence belongs to the DTD family. Homodimer.

Its subcellular location is the cytoplasm. The catalysed reaction is glycyl-tRNA(Ala) + H2O = tRNA(Ala) + glycine + H(+). It catalyses the reaction a D-aminoacyl-tRNA + H2O = a tRNA + a D-alpha-amino acid + H(+). Functionally, an aminoacyl-tRNA editing enzyme that deacylates mischarged D-aminoacyl-tRNAs. Also deacylates mischarged glycyl-tRNA(Ala), protecting cells against glycine mischarging by AlaRS. Acts via tRNA-based rather than protein-based catalysis; rejects L-amino acids rather than detecting D-amino acids in the active site. By recycling D-aminoacyl-tRNA to D-amino acids and free tRNA molecules, this enzyme counteracts the toxicity associated with the formation of D-aminoacyl-tRNA entities in vivo and helps enforce protein L-homochirality. The polypeptide is D-aminoacyl-tRNA deacylase (Aromatoleum aromaticum (strain DSM 19018 / LMG 30748 / EbN1) (Azoarcus sp. (strain EbN1))).